The chain runs to 273 residues: Homeobox protein Nkx-2.2 (273 aa).

Disordered regions lie at residues 1–56 (MSLT…LDAV) and 90–131 (LAAG…KRKR). Positions 20–38 (DTNDEEGSVAEGPEEENEG) are enriched in acidic residues. Residues 128-187 (KRKRRVLFSKAQTYELERRFRQQRYLSAPEREHLASLIRLTPTQVKIWFQNHRYKMKRAR) constitute a DNA-binding region (homeobox).

Belongs to the NK-2 homeobox family. In terms of assembly, interacts with OLIG2.

The protein resides in the nucleus. Functionally, transcriptional activator involved in the development of insulin-producting beta cells in the endocrine pancreas. May also be involved in specifying diencephalic neuromeric boundaries, and in controlling the expression of genes that play a role in axonal guidance. Binds to elements within the NEUROD1 promoter. The sequence is that of Homeobox protein Nkx-2.2 (NKX2-2) from Homo sapiens (Human).